We begin with the raw amino-acid sequence, 123 residues long: Large ribosomal subunit protein uL18 (123 aa).

It belongs to the universal ribosomal protein uL18 family. In terms of assembly, part of the 50S ribosomal subunit; part of the 5S rRNA/L5/L18/L25 subcomplex. Contacts the 5S and 23S rRNAs.

Functionally, this is one of the proteins that bind and probably mediate the attachment of the 5S RNA into the large ribosomal subunit, where it forms part of the central protuberance. In Bifidobacterium longum (strain DJO10A), this protein is Large ribosomal subunit protein uL18.